The chain runs to 32 residues: Ranatuerin-2CSa (32 aa).

A disulfide bridge links Cys-27 with Cys-32.

In terms of tissue distribution, expressed by the skin glands.

The protein localises to the secreted. The protein resides in the target cell membrane. Its function is as follows. Antibacterial peptide with amphipathic alpha-helical structure. Active against E.coli ATCC 25726 (MIC=4-5 uM) and S.aureus ATCC 25923 (MIC=8-10 uM). Has a weak hemolytic activity on human erythrocytes (LC(50)=150-160 uM). The chain is Ranatuerin-2CSa from Rana cascadae (Cascades frog).